The sequence spans 109 residues: Encapsulin nanocompartment cargo protein EncD (109 aa).

Glu-47 is a Fe cation binding site. Residues Ala-61–Ala-94 are disordered. Residues Ala-66–Gly-85 are compositionally biased toward low complexity. A probable targeting peptide region spans residues Leu-100–Arg-106.

The protein resides in the encapsulin nanocompartment. Cargo protein of a type 1 encapsulin nanocompartment. May help nucleate Fe atoms in the interior of the encapsulin nanocompartment. Present in about 47 copies/encapsulin nanocompartment. The protein is Encapsulin nanocompartment cargo protein EncD of Myxococcus xanthus (strain DK1622).